Reading from the N-terminus, the 199-residue chain is MVLPLLKVGSLLIKSLAKPLSKQIKIRASKSPIFHDRVVRGARLWHKLDLKLTKFNGDTTRKPVDLNVNAAIDLGTEIVSEAFLLSVAIGLLLYETSRSSEKDKKKEEALQNRFKNLEEKLEVQQETINNLTNVIEAIQSSNPNLNIYIDPNQSTKSSIAEYINTHNIKLNSLKNAQTENDYKSISSEGIPNKRISNVN.

Positions 98-141 (RSSEKDKKKEEALQNRFKNLEEKLEVQQETINNLTNVIEAIQSS) form a coiled coil.

The protein belongs to the OPA3 family.

The protein is OPA3-like protein of Dictyostelium discoideum (Social amoeba).